Reading from the N-terminus, the 374-residue chain is Aclacinomycin 10-hydroxylase RdmB (374 aa).

The S-adenosyl-L-methionine site is built by Tyr-171, Gly-190, Glu-213, Asp-240, Phe-241, and Ser-255.

Belongs to the class I-like SAM-binding methyltransferase superfamily. Cation-independent O-methyltransferase family. In terms of assembly, homodimer. Homotetramer in solution. Tetramers might not be very stable in solution.

It carries out the reaction 15-demethylaclacinomycin T + AH2 + O2 = 10-decarboxymethylaclacinomycin T + A + CO2 + H2O. It catalyses the reaction 10-carboxy-13-deoxycarminomycin + AH2 + O2 + H(+) = 10-hydroxy-13-deoxycarminomycin + A + CO2 + H2O. The enzyme catalyses 10-hydroxy-13-deoxycarminomycin + S-adenosyl-L-methionine = 10-hydroxy-13-deoxydaunorubicin + S-adenosyl-L-homocysteine + H(+). It participates in antibiotic biosynthesis; rhodomycin biosynthesis. Its pathway is antibiotic biosynthesis; aclacinomycin biosynthesis. With respect to regulation, the hydroxylation reaction requires S-adenosyl-L-methionine (SAM) as a cofactor. S-adenosine-L-homocysteine and sinefungin (a SAM analog) can also support the decarboxylative hydroxylation activity with 10-carboxy-13-deoxycarminomycin as substrate. SAM and its analogs are considered an essential structural ligand to maintain ternary structural integrity and the proper binding mode and orientation of electron-rich substrates during decarboxylative hydroxylation of C-10 by RdmB. Involved in the biosynthesis of anthracyclines, an important group of aromatic polyketide antibiotics used in cancer chemotherapy. Acts as a 10-hydroxylase to catalyze a decarboxylative hydroxylation reaction on anthracyclines. During biosynthesis of rhodomycin, it catalyzes the removal of the carboxylic group at the C-10 position of 15-demethoxy-epsilon-rhodomycin coupled to hydroxylation at the same C-10 position to yield beta-rhodomycin. In vitro, can also catalyze the removal of the carboxylic group at the C-10 position of 15-demethoxyaclacinomycin T coupled to hydroxylation at the same C-10 position to yield 10-decarboxymethylaclacinomycin T. It can also use 10-carboxy-13-deoxycarminomycin, an analog of 15-demethoxy-epsilon-rhodomycin, to yield 10-hydroxy-13-deoxycarminomycin. Functionally, in addition to its hydroxylation activity, it can act in vitro as a S-adenosyl-L-methionine-dependent O-methyltransferase and catalyze the 4-O-methylation of 10-hydroxy-13-deoxycarminomycin to 10-hydroxy-13-deoxydaunorubicin. The triglycosyl group of anthracyclines prevents the methylation reaction. The sequence is that of Aclacinomycin 10-hydroxylase RdmB from Streptomyces purpurascens.